Consider the following 215-residue polypeptide: RWD domain-containing protein C1393.09c (215 aa).

The region spanning 7 to 114 is the RWD domain; it reads EEREILESIY…SVAKEETNAI (108 aa).

It is found in the cytoplasm. The protein localises to the nucleus. This is RWD domain-containing protein C1393.09c from Schizosaccharomyces pombe (strain 972 / ATCC 24843) (Fission yeast).